Here is a 434-residue protein sequence, read N- to C-terminus: Methylenetetrahydrofolate--tRNA-(uracil-5-)-methyltransferase TrmFO (434 aa).

Residue 9-14 participates in FAD binding; the sequence is GAGLAG.

This sequence belongs to the MnmG family. TrmFO subfamily. Requires FAD as cofactor.

The protein localises to the cytoplasm. The enzyme catalyses uridine(54) in tRNA + (6R)-5,10-methylene-5,6,7,8-tetrahydrofolate + NADH + H(+) = 5-methyluridine(54) in tRNA + (6S)-5,6,7,8-tetrahydrofolate + NAD(+). It carries out the reaction uridine(54) in tRNA + (6R)-5,10-methylene-5,6,7,8-tetrahydrofolate + NADPH + H(+) = 5-methyluridine(54) in tRNA + (6S)-5,6,7,8-tetrahydrofolate + NADP(+). In terms of biological role, catalyzes the folate-dependent formation of 5-methyl-uridine at position 54 (M-5-U54) in all tRNAs. The polypeptide is Methylenetetrahydrofolate--tRNA-(uracil-5-)-methyltransferase TrmFO (Listeria monocytogenes serotype 4b (strain F2365)).